An 867-amino-acid chain; its full sequence is V-set and immunoglobulin domain-containing protein 10-like (867 aa).

Residues 1–27 form the signal peptide; that stretch reads MDNPQALPLFLLLASLVGILTLRASSG. Over 28-776 the chain is Extracellular; the sequence is LQQTNFSSAF…RAGPTLSHGA (749 aa). Asn-32 carries N-linked (GlcNAc...) asparagine glycosylation. Residues 35 to 45 show a composition bias toward low complexity; it reads SAFSSDSKSSS. The interval 35–60 is disordered; that stretch reads SAFSSDSKSSSQGLGVEVPSIKPPSW. 3 N-linked (GlcNAc...) asparagine glycosylation sites follow: Asn-88, Asn-96, and Asn-144. The interval 104 to 186 is disordered; the sequence is LSPVSPFSET…PESKFSAETH (83 aa). Over residues 137–153 the composition is skewed to polar residues; it reads TVKTPASNISTQVSHTK. Residues 159-170 show a composition bias toward basic and acidic residues; it reads PDSKFSPDDMDL. Positions 173–186 are enriched in polar residues; sequence SAQSPESKFSAETH. Ig-like C2-type domains follow at residues 302 to 394 and 402 to 487; these read PQLS…ADVS and PTIT…SLLN. A disulfide bridge connects residues Cys-324 and Cys-378. Asn-423 carries N-linked (GlcNAc...) asparagine glycosylation. Residues Cys-428 and Cys-471 are joined by a disulfide bond. A glycan (N-linked (GlcNAc...) asparagine) is linked at Asn-487. Positions 602-627 are disordered; the sequence is ASGCPPPSRASWAREGRPLAPGGGSR. N-linked (GlcNAc...) asparagine glycans are attached at residues Asn-641 and Asn-650. A helical membrane pass occupies residues 777 to 797; sequence IAGIVLGSLLGLALLAVLLLL. The Cytoplasmic segment spans residues 798 to 867; that stretch reads CICCLCRFRG…QAQTPVQLSL (70 aa).

As to expression, expressed in the esophagus, particularly in the suprabasilar layers of the epithelium. Expression is largely reduced in esophageal metaplasia, dysplasia, and adenocarcinoma lesions.

It localises to the membrane. The sequence is that of V-set and immunoglobulin domain-containing protein 10-like (VSIG10L) from Homo sapiens (Human).